The following is a 307-amino-acid chain: Acetyl-coenzyme A carboxylase carboxyl transferase subunit beta (307 aa).

Residues 1 to 21 (MAMADQRNDKPGRPAAQRERR) are disordered. The region spanning 43–307 (LWVKCPETGE…MGRERLSPAA (265 aa)) is the CoA carboxyltransferase N-terminal domain.

Belongs to the AccD/PCCB family. Acetyl-CoA carboxylase is a heterohexamer composed of biotin carboxyl carrier protein (AccB), biotin carboxylase (AccC) and two subunits each of ACCase subunit alpha (AccA) and ACCase subunit beta (AccD).

The protein resides in the cytoplasm. It carries out the reaction N(6)-carboxybiotinyl-L-lysyl-[protein] + acetyl-CoA = N(6)-biotinyl-L-lysyl-[protein] + malonyl-CoA. It functions in the pathway lipid metabolism; malonyl-CoA biosynthesis; malonyl-CoA from acetyl-CoA: step 1/1. Functionally, component of the acetyl coenzyme A carboxylase (ACC) complex. Biotin carboxylase (BC) catalyzes the carboxylation of biotin on its carrier protein (BCCP) and then the CO(2) group is transferred by the transcarboxylase to acetyl-CoA to form malonyl-CoA. The polypeptide is Acetyl-coenzyme A carboxylase carboxyl transferase subunit beta (Phenylobacterium zucineum (strain HLK1)).